The following is a 321-amino-acid chain: tRNA-dihydrouridine synthase B (321 aa).

Residues 16–18 (PMA) and glutamine 70 each bind FMN. Cysteine 100 (proton donor) is an active-site residue. FMN-binding positions include lysine 139, 200–202 (NGD), and 224–225 (GR).

It belongs to the Dus family. DusB subfamily. Requires FMN as cofactor.

It catalyses the reaction a 5,6-dihydrouridine in tRNA + NAD(+) = a uridine in tRNA + NADH + H(+). The catalysed reaction is a 5,6-dihydrouridine in tRNA + NADP(+) = a uridine in tRNA + NADPH + H(+). Functionally, catalyzes the synthesis of 5,6-dihydrouridine (D), a modified base found in the D-loop of most tRNAs, via the reduction of the C5-C6 double bond in target uridines. The sequence is that of tRNA-dihydrouridine synthase B from Salmonella typhi.